We begin with the raw amino-acid sequence, 388 residues long: S-adenosylmethionine synthase (388 aa).

Residue H17 participates in ATP binding. A Mg(2+)-binding site is contributed by D19. Residue E45 coordinates K(+). Residues E58 and Q101 each contribute to the L-methionine site. The segment at 101 to 111 (QSPDIGQGVDT) is flexible loop. Residues 160-162 (DGK), 226-227 (RF), D235, 241-242 (RK), A258, and K262 each bind ATP. An L-methionine-binding site is contributed by D235. K266 serves as a coordination point for L-methionine.

It belongs to the AdoMet synthase family. In terms of assembly, homotetramer; dimer of dimers. Mg(2+) serves as cofactor. K(+) is required as a cofactor.

It is found in the cytoplasm. The catalysed reaction is L-methionine + ATP + H2O = S-adenosyl-L-methionine + phosphate + diphosphate. Its pathway is amino-acid biosynthesis; S-adenosyl-L-methionine biosynthesis; S-adenosyl-L-methionine from L-methionine: step 1/1. Its function is as follows. Catalyzes the formation of S-adenosylmethionine (AdoMet) from methionine and ATP. The overall synthetic reaction is composed of two sequential steps, AdoMet formation and the subsequent tripolyphosphate hydrolysis which occurs prior to release of AdoMet from the enzyme. The polypeptide is S-adenosylmethionine synthase (Anaeromyxobacter sp. (strain K)).